Reading from the N-terminus, the 207-residue chain is Phenazine biosynthesis protein PhzD (207 aa).

The active-site Proton donor is the Asp38. Substrate is bound by residues Gln78, Arg87, Lys122, and 151–155; that span reads YAHVG.

It belongs to the isochorismatase family. Homodimer.

It catalyses the reaction (2S)-2-amino-4-deoxychorismate + H2O = (5S,6S)-6-amino-5-hydroxycyclohexa-1,3-diene-1-carboxyate + pyruvate. Its pathway is antibiotic biosynthesis; phenazine biosynthesis. Its function is as follows. Involved in the biosynthesis of the antibiotic phenazine, a nitrogen-containing heterocyclic molecule having important roles in virulence, competition and biological control. Catalyzes the hydrolysis of the vinyl ether functional group of 2-amino-2-deoxyisochorismate (ADIC), yielding pyruvate and trans-2,3-dihydro-3-hydroxyanthranilic acid (DHHA). The chain is Phenazine biosynthesis protein PhzD from Pseudomonas fluorescens.